Reading from the N-terminus, the 286-residue chain is Large ribosomal subunit protein uL4m (286 aa).

The transit peptide at 1 to 26 directs the protein to the mitochondrion; that stretch reads MTIKRNLVKTLQSIRYQATTATAHAE. The segment at 85 to 132 is disordered; the sequence is RRVGASNPPGRSENGFSRRKLMPQKGSGRARVGDANSPTRHNGGRALA.

The protein belongs to the universal ribosomal protein uL4 family. In terms of assembly, component of the mitochondrial large ribosomal subunit (mt-LSU). Mature yeast 74S mitochondrial ribosomes consist of a small (37S) and a large (54S) subunit. The 37S small subunit contains a 15S ribosomal RNA (15S mt-rRNA) and 34 different proteins. The 54S large subunit contains a 21S rRNA (21S mt-rRNA) and 46 different proteins.

It is found in the mitochondrion. Functionally, component of the mitochondrial ribosome (mitoribosome), a dedicated translation machinery responsible for the synthesis of mitochondrial genome-encoded proteins, including at least some of the essential transmembrane subunits of the mitochondrial respiratory chain. The mitoribosomes are attached to the mitochondrial inner membrane and translation products are cotranslationally integrated into the membrane. The protein is Large ribosomal subunit protein uL4m (YML6) of Saccharomyces cerevisiae (strain ATCC 204508 / S288c) (Baker's yeast).